A 147-amino-acid chain; its full sequence is MKFTKPLLLLIVAIIASSNAAETFSNFQVTNSDASSPCVTTPVELKVNTCQSACGSILNVLPVTGSTSKFTFNQFGAQDTKCAATPTSSNEFTCVDGKSKVAIGTTTYSVVCVPDKTNSSESDSSDSTRIGASFALFALALLSMLAL.

Positions 1–20 (MKFTKPLLLLIVAIIASSNA) are cleaved as a signal peptide. The GPI-like-anchor amidated asparagine moiety is linked to residue Asn118. An N-linked (GlcNAc...) asparagine glycan is attached at Asn118. A propeptide spans 119-147 (SSESDSSDSTRIGASFALFALALLSMLAL) (removed in mature form).

This sequence belongs to the ponticulin family. In terms of processing, the GPI-like-anchor contains a phosphoceramide group, rather than a phosphatidyl group.

It is found in the cell membrane. The sequence is that of Ponticulin-like protein C2 (ponC2) from Dictyostelium discoideum (Social amoeba).